The primary structure comprises 273 residues: Cyclic di-AMP synthase CdaA (273 aa).

3 consecutive transmembrane segments (helical) span residues 12-32 (LGNA…IMVI), 40-60 (LLKG…LGLS), and 61-81 (TLQW…IIIF). One can recognise a DAC domain in the interval 82–242 (QPELRRALEQ…NGDLHRELTE (161 aa)).

Belongs to the adenylate cyclase family. DacA/CdaA subfamily. As to quaternary structure, probably a homodimer. Interacts with CdaR. May interact with GlmM.

The protein resides in the cell membrane. It catalyses the reaction 2 ATP = 3',3'-c-di-AMP + 2 diphosphate. With respect to regulation, DAC activity is stimulated about 20-fold in E.coli by coexpression with CdaR. In terms of biological role, one of 3 paralogous diadenylate cyclases (DAC) in this bacteria, catalyzing the condensation of 2 ATP molecules into cyclic di-AMP (c-di-AMP). Upon expression in E.coli leads to c-di-AMP synthesis. Probably the main producer of c-di-AMP for the cell; is probably implicated in control of peptidoglycan synthesis. In B.subtilis c-di-AMP is a second messenger that mediates growth, DNA repair and cell wall homeostasis; it is toxic when present in excess. The chain is Cyclic di-AMP synthase CdaA from Bacillus subtilis (strain 168).